The primary structure comprises 271 residues: Dermonecrotic toxin LhSicTox-alphaIA2aiv (271 aa).

Residue histidine 3 is part of the active site. Mg(2+) contacts are provided by glutamate 23 and aspartate 25. Catalysis depends on histidine 39, which acts as the Nucleophile. Cystine bridges form between cysteine 43–cysteine 49 and cysteine 45–cysteine 188. Aspartate 83 serves as a coordination point for Mg(2+).

It belongs to the arthropod phospholipase D family. Class II subfamily. Requires Mg(2+) as cofactor. Expressed by the venom gland.

It localises to the secreted. It carries out the reaction an N-(acyl)-sphingosylphosphocholine = an N-(acyl)-sphingosyl-1,3-cyclic phosphate + choline. The enzyme catalyses an N-(acyl)-sphingosylphosphoethanolamine = an N-(acyl)-sphingosyl-1,3-cyclic phosphate + ethanolamine. The catalysed reaction is a 1-acyl-sn-glycero-3-phosphocholine = a 1-acyl-sn-glycero-2,3-cyclic phosphate + choline. It catalyses the reaction a 1-acyl-sn-glycero-3-phosphoethanolamine = a 1-acyl-sn-glycero-2,3-cyclic phosphate + ethanolamine. Its function is as follows. Dermonecrotic toxins cleave the phosphodiester linkage between the phosphate and headgroup of certain phospholipids (sphingolipid and lysolipid substrates), forming an alcohol (often choline) and a cyclic phosphate. This toxin acts on sphingomyelin (SM). It may also act on ceramide phosphoethanolamine (CPE), lysophosphatidylcholine (LPC) and lysophosphatidylethanolamine (LPE), but not on lysophosphatidylserine (LPS), and lysophosphatidylglycerol (LPG). It acts by transphosphatidylation, releasing exclusively cyclic phosphate products as second products. Induces dermonecrosis, hemolysis, increased vascular permeability, edema, inflammatory response, and platelet aggregation. The sequence is that of Dermonecrotic toxin LhSicTox-alphaIA2aiv from Loxosceles hirsuta (Recluse spider).